The primary structure comprises 220 residues: Peptidyl-tRNA hydrolase (220 aa).

A tRNA-binding site is contributed by Tyr-14. Residue His-19 is the Proton acceptor of the active site. Positions 60, 62, and 106 each coordinate tRNA.

It belongs to the PTH family. As to quaternary structure, monomer.

The protein localises to the cytoplasm. The catalysed reaction is an N-acyl-L-alpha-aminoacyl-tRNA + H2O = an N-acyl-L-amino acid + a tRNA + H(+). In terms of biological role, hydrolyzes ribosome-free peptidyl-tRNAs (with 1 or more amino acids incorporated), which drop off the ribosome during protein synthesis, or as a result of ribosome stalling. Its function is as follows. Catalyzes the release of premature peptidyl moieties from peptidyl-tRNA molecules trapped in stalled 50S ribosomal subunits, and thus maintains levels of free tRNAs and 50S ribosomes. This Campylobacter hominis (strain ATCC BAA-381 / DSM 21671 / CCUG 45161 / LMG 19568 / NCTC 13146 / CH001A) protein is Peptidyl-tRNA hydrolase.